An 884-amino-acid chain; its full sequence is Probable ribonuclease ZC3H12C (884 aa).

A disordered region spans residues 66–108 (KPTMDTVNSGKEGKGVSEENVSSGDSEGSTSSDHESEQLSSLS). Over residues 87-96 (SSGDSEGSTS) the composition is skewed to low complexity. Ser231 carries the phosphoserine modification. The RNase NYN domain occupies 246 to 401 (LRPVVIDGSN…LGRHGPSLDN (156 aa)). The C3H1-type zinc-finger motif lies at 411–436 (EHKKQPCPYGKKCTYGHKCKYYHPER). A compositionally biased stretch (polar residues) spans 456 to 478 (AAKTTNEGGLVKSNSVPCSTKAD). Disordered stretches follow at residues 456–548 (AAKT…SGVH), 716–739 (VGAR…KAPH), and 755–776 (SRLY…EGLG). Residues 500-516 (VYQDIEEKLPTKNKLET) are compositionally biased toward basic and acidic residues. Positions 518–543 (SVPSLVSIPATSTAKPQSTTPLSNGL) are enriched in polar residues.

This sequence belongs to the ZC3H12 family. Mg(2+) serves as cofactor.

Functionally, may function as RNase and regulate the levels of target RNA species. This chain is Probable ribonuclease ZC3H12C (Zc3h12c), found in Mus musculus (Mouse).